A 61-amino-acid chain; its full sequence is Small ribosomal subunit protein uS14B (61 aa).

Residues cysteine 24, cysteine 27, cysteine 40, and cysteine 43 each contribute to the Zn(2+) site.

The protein belongs to the universal ribosomal protein uS14 family. Zinc-binding uS14 subfamily. In terms of assembly, part of the 30S ribosomal subunit. Contacts proteins S3 and S10. It depends on Zn(2+) as a cofactor.

Binds 16S rRNA, required for the assembly of 30S particles and may also be responsible for determining the conformation of the 16S rRNA at the A site. The polypeptide is Small ribosomal subunit protein uS14B (Ligilactobacillus salivarius (strain UCC118) (Lactobacillus salivarius)).